Consider the following 639-residue polypeptide: Lipoteichoic acid synthase 1 (639 aa).

The Cytoplasmic portion of the chain corresponds to 1-3 (MKK). The chain crosses the membrane as a helical span at residues 4 to 24 (LFSYKLSFFVLAVILFWAKTY). Over 25–41 (LSYKTEFNLGVKGTTQE) the chain is Extracellular. The helical transmembrane segment at 42–62 (ILLIFNPFSSAVFFLGLALLA) threads the bilayer. Residues 63–67 (KGRKS) lie on the Cytoplasmic side of the membrane. A helical membrane pass occupies residues 68–88 (AIIMLIIDFLMTFVLYANILF). Topologically, residues 89–116 (YRFFDDFLTFPNIKQSGNVGNMGDGIFS) are extracellular. Residues 117 to 137 (IMAGHDIFYFLDIIILIAVLI) traverse the membrane as a helical segment. Residues 138-150 (WRPELKEYKMKKR) lie on the Cytoplasmic side of the membrane. A helical transmembrane segment spans residues 151-171 (FASLVILSGIALFFINLHYAE). Residues 172–639 (KDRPQLLTRT…YHYGKEKEIK (468 aa)) lie on the Extracellular side of the membrane. Mn(2+)-binding residues include E252 and T297. T297 is an active-site residue. Residue H413 participates in substrate binding. Positions 472 and 473 each coordinate Mn(2+).

The protein belongs to the LTA synthase family. In terms of processing, proteolytically cleaved by the type I signal peptidases SipT and SipV.

The protein resides in the cell membrane. The protein localises to the secreted. It participates in cell wall biogenesis; lipoteichoic acid biosynthesis. Catalyzes the polymerization of lipoteichoic acid (LTA) polyglycerol phosphate, a reaction that presumably uses phosphatidylglycerol (PG) as substrate. The chain is Lipoteichoic acid synthase 1 (ltaS1) from Bacillus subtilis (strain 168).